Reading from the N-terminus, the 227-residue chain is UPF0173 metal-dependent hydrolase BCAH820_4729 (227 aa).

This sequence belongs to the UPF0173 family.

In Bacillus cereus (strain AH820), this protein is UPF0173 metal-dependent hydrolase BCAH820_4729.